Here is a 132-residue protein sequence, read N- to C-terminus: Large ribosomal subunit protein bL21 (132 aa).

The segment at 104–132 (GKAPSIGPRPPREKKPVVETSAEADDAAA) is disordered.

The protein belongs to the bacterial ribosomal protein bL21 family. In terms of assembly, part of the 50S ribosomal subunit. Contacts protein L20.

Its function is as follows. This protein binds to 23S rRNA in the presence of protein L20. This is Large ribosomal subunit protein bL21 from Rhodopseudomonas palustris (strain BisB18).